The primary structure comprises 417 residues: UDP-N-acetylglucosamine 1-carboxyvinyltransferase (417 aa).

Residue 22 to 23 (KN) participates in phosphoenolpyruvate binding. Arg-92 lines the UDP-N-acetyl-alpha-D-glucosamine pocket. The Proton donor role is filled by Cys-116. Residue Cys-116 is modified to 2-(S-cysteinyl)pyruvic acid O-phosphothioketal. Positions 304 and 326 each coordinate UDP-N-acetyl-alpha-D-glucosamine.

The protein belongs to the EPSP synthase family. MurA subfamily.

The protein localises to the cytoplasm. It catalyses the reaction phosphoenolpyruvate + UDP-N-acetyl-alpha-D-glucosamine = UDP-N-acetyl-3-O-(1-carboxyvinyl)-alpha-D-glucosamine + phosphate. Its pathway is cell wall biogenesis; peptidoglycan biosynthesis. Functionally, cell wall formation. Adds enolpyruvyl to UDP-N-acetylglucosamine. This chain is UDP-N-acetylglucosamine 1-carboxyvinyltransferase, found in Geotalea uraniireducens (strain Rf4) (Geobacter uraniireducens).